Reading from the N-terminus, the 86-residue chain is Translation initiation factor IF-1 (86 aa).

Residues M1 to K72 form the S1-like domain.

It belongs to the IF-1 family. Component of the 30S ribosomal translation pre-initiation complex which assembles on the 30S ribosome in the order IF-2 and IF-3, IF-1 and N-formylmethionyl-tRNA(fMet); mRNA recruitment can occur at any time during PIC assembly.

The protein resides in the cytoplasm. In terms of biological role, one of the essential components for the initiation of protein synthesis. Stabilizes the binding of IF-2 and IF-3 on the 30S subunit to which N-formylmethionyl-tRNA(fMet) subsequently binds. Helps modulate mRNA selection, yielding the 30S pre-initiation complex (PIC). Upon addition of the 50S ribosomal subunit IF-1, IF-2 and IF-3 are released leaving the mature 70S translation initiation complex. The chain is Translation initiation factor IF-1 from Pseudothermotoga lettingae (strain ATCC BAA-301 / DSM 14385 / NBRC 107922 / TMO) (Thermotoga lettingae).